A 222-amino-acid polypeptide reads, in one-letter code: Cell division protein FtsQ (222 aa).

The Cytoplasmic segment spans residues 1–5 (MNKKV). Residues 6 to 26 (IAIVVGVVVVLVAILGVVAWF) form a helical membrane-spanning segment. Over 27–222 (VPILKVGNIE…ISSPSMVTVR (196 aa)) the chain is Extracellular. One can recognise a POTRA domain in the interval 30-98 (LKVGNIEVTG…STITVELTER (69 aa)).

Belongs to the FtsQ/DivIB family. FtsQ subfamily.

The protein localises to the cell membrane. Essential cell division protein. In Corynebacterium glutamicum (strain ATCC 13032 / DSM 20300 / JCM 1318 / BCRC 11384 / CCUG 27702 / LMG 3730 / NBRC 12168 / NCIMB 10025 / NRRL B-2784 / 534), this protein is Cell division protein FtsQ.